A 423-amino-acid chain; its full sequence is Zinc finger protein Gfi-1 (423 aa).

The interval 1-20 (MPRSFLVKSKKAHSYHQPRS) is SNAG domain. Residues 1–76 (MPRSFLVKSK…DRASASPNSC (76 aa)) form a disordered region. A phosphoserine mark is found at serine 20 and serine 57. Basic and acidic residues predominate over residues 48 to 57 (SKMEPRERLS). The tract at residues 141 to 258 (RQCSALERSA…LLLGGGSYKC (118 aa)) is required for interaction with RELA. 6 C2H2-type zinc fingers span residues 256–279 (YKCI…RRSH), 285–307 (FACE…KAVH), 313–335 (FDCK…LLIH), 341–363 (YPCQ…TFIH), 369–391 (HKCQ…SRKH), and 397–420 (FGCD…ETQH).

As to quaternary structure, interacts (via the zinc-finger domain) with ARIH2; the interaction prevents GFI1 ubiquitination and proteasomal degradation. Forms a complex with EHMT2 and HDAC1 to promote 'Lys-9' dimethylation of H3 (H3K9Me2) and repress expression of target genes. Interacts directly with EHMT2. Interacts with RUNX1T1; the interaction represses HDAC-mediated transcriptional activity. Interacts (via the C-terminal zinc fingers) with ZBTB17; the interaction results in the recruitment of GFI1 to the CDKN1A/p21 and CDKNIB promoters and repression of transcription. Interacts with U2AF1L4. Component of RCOR-GFI-KDM1A-HDAC complexes. Interacts directly with RCOR1, KDM1A and HDAC2. Also interacts with HDAC1. Component of the GFI1-AJUBA-HDAC1 repressor complex. Interacts directly with AJUBA (via its LIM domains); the interaction results in the HDAC-dependent corepression of a subset of GFI1 target genes and, occurs independently of the SNAG domain. Interacts with SPI1; the interaction inhibits SPI1 transcriptional activity targeted at macrophage-specific genes, repressing macrophage differentiation of myeloid progenitor cells and promoting granulocyte commitment. Interacts with PIAS3; the interaction relieves the inhibitory effect of PIAS3 on STAT3-mediated transcriptional activity. Interacts with RELA; the interaction occurs on liposaccharide (LPS) stimulation and controls RELA DNA binding activity and regulates endotoxin-mediated TOLL-like receptor inflammatory response. Ubiquitinated.

The protein localises to the nucleus. Its function is as follows. Transcription repressor essential for hematopoiesis. Functions in a cell-context and development-specific manner. Binds to 5'-TAAATCAC[AT]GCA-3' in the promoter region of a large number of genes. Component of several complexes, including the EHMT2-GFI1-HDAC1, AJUBA-GFI1-HDAC1 and RCOR-GFI-KDM1A-HDAC complexes, that suppress, via histone deacetylase (HDAC) recruitment, a number of genes implicated in multilineage blood cell development. Regulates neutrophil differentiation, promotes proliferation of lymphoid cells, and is required for granulocyte development. Inhibits SPI1 transcriptional activity at macrophage-specific genes, repressing macrophage differentiation of myeloid progenitor cells and promoting granulocyte commitment. Mediates, together with U2AF1L4, the alternative splicing of CD45 and controls T-cell receptor signaling. Regulates the endotoxin-mediated Toll-like receptor (TLR) inflammatory response by antagonizing RELA. Cooperates with CBFA2T2 to regulate ITGB1-dependent neurite growth. Controls cell-cycle progression by repressing CDKNIA/p21 transcription in response to TGFB1 via recruitment of GFI1 by ZBTB17 to the CDKNIA/p21 and CDKNIB promoters. Required for the maintenance of inner ear hair cells. In addition to its role in transcription, acts as a substrate adapter for PRMT1 in the DNA damage response. Facilitates the recognition of TP53BP1 and MRE11 substrates by PRMT1, promoting their methylation and the DNA damage response. The sequence is that of Zinc finger protein Gfi-1 (Gfi1) from Mus musculus (Mouse).